The sequence spans 637 residues: PTS system mannitol-specific EIICBA component (637 aa).

At 1 to 23 (MSSDIKIKVQSFGRFLSNMVMPN) the chain is on the cytoplasmic side. A PTS EIIC type-2 domain is found at 12–341 (FGRFLSNMVM…ILLKTSKVKE (330 aa)). The chain crosses the membrane as a helical span at residues 24-45 (IGAFIAWGIITALFIPTGWLPN). Over 46–49 (ETLA) the chain is Periplasmic. The helical transmembrane segment at 50–70 (KLVGPMITYLLPLLIGYTGGK) threads the bilayer. Residues 71-133 (LVGGERGGVV…SGFEMLVNNF (63 aa)) are Cytoplasmic-facing. Residues 134–155 (SAGIIGMILAILAFLGIGPIVE) form a helical membrane-spanning segment. Over 156 to 164 (ALSKMLAAG) the chain is Periplasmic. The chain crosses the membrane as a helical span at residues 165–185 (VNFMVVHDMLPLASIFVEPAK). At 186–272 (ILFLNNAINH…VLMNPRLILA (87 aa)) the chain is on the cytoplasmic side. A helical membrane pass occupies residues 273-292 (VILGGMTGVFTLTILGGGLV). The Periplasmic segment spans residues 293–312 (SPASPGSILAVLAMTPKGAY). The chain crosses the membrane as a helical span at residues 313 to 334 (FANIAGVCAAMAVSFVVSAILL). The Cytoplasmic segment spans residues 335–637 (KTSKVKEEDD…EVLELLAGRK (303 aa)). Residues 378–473 (RKIIVACDAG…RLVAAQRHTA (96 aa)) form the PTS EIIB type-2 domain. The active-site Phosphocysteine intermediate; for EIIB activity is cysteine 384. A Phosphocysteine; by EIIA modification is found at cysteine 384. In terms of domain architecture, PTS EIIA type-2 spans 494–636 (FKLGAENIFL…DEVLELLAGR (143 aa)). Histidine 554 serves as the catalytic Tele-phosphohistidine intermediate; for EIIA activity. At histidine 554 the chain carries Phosphohistidine; by HPr.

In terms of assembly, homodimer. An intramolecular phosphotransfer takes places between His-554 and Cys-384.

The protein localises to the cell inner membrane. It carries out the reaction D-mannitol(out) + N(pros)-phospho-L-histidyl-[protein] = D-mannitol 1-phosphate(in) + L-histidyl-[protein]. Its function is as follows. The phosphoenolpyruvate-dependent sugar phosphotransferase system (sugar PTS), a major carbohydrate active transport system, catalyzes the phosphorylation of incoming sugar substrates concomitantly with their translocation across the cell membrane. This system is involved in D-mannitol transport. Also able to use D-mannonic acid. This is PTS system mannitol-specific EIICBA component from Escherichia coli (strain K12).